The following is a 691-amino-acid chain: 1,4-alpha-glucan-branching enzyme (691 aa).

Positions 80 and 116 each coordinate (1,4-alpha-D-glucosyl)n. Residue Asp-333 is the Nucleophile of the active site. Glu-398 serves as the catalytic Proton donor.

The protein belongs to the glycosyl hydrolase 13 family. GlgB subfamily.

It localises to the cytoplasm. It catalyses the reaction Transfers a segment of a (1-&gt;4)-alpha-D-glucan chain to a primary hydroxy group in a similar glucan chain.. It functions in the pathway glycan biosynthesis; glycogen biosynthesis. Its function is as follows. Glycogen-branching enzyme participates in the glycogen biosynthetic process along with glycogenin and glycogen synthase. Generates alpha-1,6-glucosidic branches from alpha-1,4-linked glucose chains, to increase solubility of the glycogen polymer. The sequence is that of 1,4-alpha-glucan-branching enzyme (GLC3) from Yarrowia lipolytica (strain CLIB 122 / E 150) (Yeast).